A 437-amino-acid polypeptide reads, in one-letter code: MEFVEFSEVSETTKTSSLPQGHEWTVQVPAGSKLTVIVKYGIAEILGTELANDVPYTFQGVIVNIYAIERSMIEWKCLEELEPKVSENKSYHAYIYNLNFALERLRLSSFNGPRVLIVGNASTGKSSLAQMLCSYALKIRHYQPLLVNLNPQDGVFSLPGSITATPISELLDVESSIWGQSITTGATKLHNKQPLVKNYGLENIRDNRPLYLSTITQLASGVQQRLKNDPIVRRSGVIIDTPKLSHLDTEDWSEVGHMIEQFDINAIVVCAESDDLAIELSEVFRTKIGSIVRIPPPGSIIAIDDIMRRALQRVQIREYFYGTTETVLSPYTMGAGFEELTVFRPRNISEYGEDKKDVDLTVFDKIEVNSSNLQHAIIAITNISRKESQDKLNTASIIGYGLITEVNDSKKKLRVLLPVPSRIPDRAMILTEYRYLE.

ATP-binding positions include Glu23 and 122-127 (STGKSS).

This sequence belongs to the Clp1 family. Clp1 subfamily. In terms of assembly, component of a pre-mRNA cleavage factor complex. Interacts directly with PCF11.

The protein localises to the nucleus. Its function is as follows. Required for endonucleolytic cleavage during polyadenylation-dependent pre-mRNA 3'-end formation. The chain is mRNA cleavage and polyadenylation factor CLP1 from Kluyveromyces lactis (strain ATCC 8585 / CBS 2359 / DSM 70799 / NBRC 1267 / NRRL Y-1140 / WM37) (Yeast).